Reading from the N-terminus, the 221-residue chain is FMN-dependent NADH:quinone oxidoreductase 1 (221 aa).

FMN-binding positions include 17-19 (SAS) and 148-151 (SSGG).

This sequence belongs to the azoreductase type 1 family. Homodimer. The cofactor is FMN.

It carries out the reaction 2 a quinone + NADH + H(+) = 2 a 1,4-benzosemiquinone + NAD(+). It catalyses the reaction N,N-dimethyl-1,4-phenylenediamine + anthranilate + 2 NAD(+) = 2-(4-dimethylaminophenyl)diazenylbenzoate + 2 NADH + 2 H(+). Its function is as follows. Quinone reductase that provides resistance to thiol-specific stress caused by electrophilic quinones. In terms of biological role, also exhibits azoreductase activity. Catalyzes the reductive cleavage of the azo bond in aromatic azo compounds to the corresponding amines. The chain is FMN-dependent NADH:quinone oxidoreductase 1 from Clostridium acetobutylicum (strain ATCC 824 / DSM 792 / JCM 1419 / IAM 19013 / LMG 5710 / NBRC 13948 / NRRL B-527 / VKM B-1787 / 2291 / W).